Here is an 877-residue protein sequence, read N- to C-terminus: Phosphoenolpyruvate carboxylase (877 aa).

Active-site residues include histidine 137 and lysine 544.

It belongs to the PEPCase type 1 family. Mg(2+) is required as a cofactor.

It catalyses the reaction oxaloacetate + phosphate = phosphoenolpyruvate + hydrogencarbonate. Its function is as follows. Forms oxaloacetate, a four-carbon dicarboxylic acid source for the tricarboxylic acid cycle. This Edwardsiella ictaluri (strain 93-146) protein is Phosphoenolpyruvate carboxylase.